An 88-amino-acid chain; its full sequence is Sec-independent protein translocase protein TatA (88 aa).

The chain crosses the membrane as a helical span at residues 1–21 (MGGASIWHWIVVGVIVMLLFG). A disordered region spans residues 62–88 (TEPVRTLPPHPTEPAPATHATVDRKVV).

Belongs to the TatA/E family. In terms of assembly, the Tat system comprises two distinct complexes: a TatABC complex, containing multiple copies of TatA, TatB and TatC subunits, and a separate TatA complex, containing only TatA subunits. Substrates initially bind to the TatABC complex, which probably triggers association of the separate TatA complex to form the active translocon.

It localises to the cell inner membrane. In terms of biological role, part of the twin-arginine translocation (Tat) system that transports large folded proteins containing a characteristic twin-arginine motif in their signal peptide across membranes. TatA could form the protein-conducting channel of the Tat system. The polypeptide is Sec-independent protein translocase protein TatA (Methylobacterium sp. (strain 4-46)).